Consider the following 422-residue polypeptide: Retinoic acid receptor RXR-beta-B (422 aa).

The interval 1 to 89 (MNSLPPSTSA…SGPMLSQKRM (89 aa)) is modulating. NR C4-type zinc fingers lie at residues 90–110 (CAIC…CEGC) and 126–150 (CRDN…YQKC). Positions 90-155 (CAICGDRSSG…RYQKCLAMGM (66 aa)) form a DNA-binding region, nuclear receptor. Residues 156-178 (KREAVQEERQKNKERDGDYECSS) form a hinge region. Positions 161-173 (QEERQKNKERDGD) are enriched in basic and acidic residues. A disordered region spans residues 161-182 (QEERQKNKERDGDYECSSSANE). The region spanning 181–421 (NEEMPVEKIL…TFLMEMLESP (241 aa)) is the NR LBD domain.

This sequence belongs to the nuclear hormone receptor family. NR2 subfamily. Homodimer. Heterodimer; with a rar molecule. Binds DNA preferentially as a rar/rxr heterodimer. Heterodimerizes with rarga. Shows uniform expression from the blastula to mid-gastrula stages. At 12 hours post-fertilization (hpf), expressed ubiquitously but more weakly. At 24 hpf, restricted to the ventral diencephalon, pharangeal endoderm and trunk and tail mesoderm; mesoderm expression is in medial cells of each somite along the dorsoventral axis, forming stripes. At 48 hpf, expressed in forebrain, eye, midbrain and anterior hindbrain.

It localises to the nucleus. Its function is as follows. Receptor for retinoic acid. Retinoic acid receptors bind as heterodimers to their target response elements in response to their ligands, all-trans or 9-cis retinoic acid, and regulate gene expression in various biological processes. The rar/rxr heterodimers bind to the retinoic acid response elements (RARE) composed of tandem 5'-AGGTCA-3' sites known as DR1-DR5. The high affinity ligand for rxrs is 9-cis retinoic acid. This is Retinoic acid receptor RXR-beta-B (rxrbb) from Danio rerio (Zebrafish).